The following is a 92-amino-acid chain: Small ribosomal subunit protein uS19 (92 aa).

The protein belongs to the universal ribosomal protein uS19 family.

Functionally, protein S19 forms a complex with S13 that binds strongly to the 16S ribosomal RNA. This Halalkalibacterium halodurans (strain ATCC BAA-125 / DSM 18197 / FERM 7344 / JCM 9153 / C-125) (Bacillus halodurans) protein is Small ribosomal subunit protein uS19 (rpsS).